We begin with the raw amino-acid sequence, 334 residues long: G-protein coupled receptor 12 (334 aa).

Residues 1-48 lie on the Extracellular side of the membrane; sequence MNEDPKVNLSGLPRDCIDAGAPENISAAVPSQGSVAESEPELVVNPWD. Asn8 and Asn24 each carry an N-linked (GlcNAc...) asparagine glycan. A helical transmembrane segment spans residues 49–69; that stretch reads IVLCSSGTLICCENAVVVLII. The Cytoplasmic segment spans residues 70–78; sequence FHSPSLRAP. Residues 79-99 form a helical membrane-spanning segment; the sequence is MFLLIGSLALADLLAGLGLII. Residues 100 to 113 lie on the Extracellular side of the membrane; it reads NFVFAYLLQSEATK. The chain crosses the membrane as a helical span at residues 114-134; sequence LVTIGLIVASFSASVCSLLAI. Over 135-158 the chain is Cytoplasmic; it reads TVDRYLSLYYALTYHSERTVTFTY. A helical transmembrane segment spans residues 159–179; that stretch reads VMLVMLWGTSICLGLLPVMGW. At 180–199 the chain is on the extracellular side; the sequence is NCLRDESTCSVVRPLTKNNA. Residues 200 to 220 traverse the membrane as a helical segment; the sequence is AILSISFLFMFALMLQLYIQI. The Cytoplasmic portion of the chain corresponds to 221–252; sequence CKIVMRHAHQIALQHHFLATSHYVTTRKGVST. A helical membrane pass occupies residues 253–273; it reads LALILGTFAACWMPFTLYSLI. Topologically, residues 274-282 are extracellular; the sequence is ADYTYPSIY. A helical membrane pass occupies residues 283-303; it reads TYATLLPATYNSIINPVIYAF. The Cytoplasmic segment spans residues 304–334; that stretch reads RNQEIQKALCLICCGCIPSSLSQRARSPSDV. Cys317 is lipidated: S-palmitoyl cysteine. Phosphoserine occurs at positions 330 and 332.

It belongs to the G-protein coupled receptor 1 family. In terms of tissue distribution, expressed predominantly in the forebrain and a lesser extent in the hindbrain. Lower expression in the liver.

It localises to the cell membrane. Its function is as follows. Receptor with constitutive G(s) signaling activity that stimulates cyclic AMP production. Promotes neurite outgrowth and blocks myelin inhibition in neurons. This Mus musculus (Mouse) protein is G-protein coupled receptor 12 (Gpr12).